The following is a 182-amino-acid chain: Large ribosomal subunit protein uL16 (182 aa).

It belongs to the universal ribosomal protein uL16 family.

This is Large ribosomal subunit protein uL16 from Pyrobaculum neutrophilum (strain DSM 2338 / JCM 9278 / NBRC 100436 / V24Sta) (Thermoproteus neutrophilus).